The primary structure comprises 254 residues: DNA-3-methyladenine glycosylase (254 aa).

The span at 1-10 (MKTPARRSKR) shows a compositional bias: basic residues. The segment at 1–20 (MKTPARRSKRVNQEESETNV) is disordered.

This sequence belongs to the DNA glycosylase MPG family.

Its subcellular location is the nucleus. It catalyses the reaction Hydrolysis of alkylated DNA, releasing 3-methyladenine, 3-methylguanine, 7-methylguanine and 7-methyladenine.. Hydrolysis of the deoxyribose N-glycosidic bond to excise 3-methyladenine, and 7-methylguanine from the damaged DNA polymer formed by alkylation lesions. This is DNA-3-methyladenine glycosylase (MAG) from Arabidopsis thaliana (Mouse-ear cress).